The following is a 552-amino-acid chain: Formate--tetrahydrofolate ligase (552 aa).

65–72 (TPAGEGKT) contacts ATP.

The protein belongs to the formate--tetrahydrofolate ligase family.

It carries out the reaction (6S)-5,6,7,8-tetrahydrofolate + formate + ATP = (6R)-10-formyltetrahydrofolate + ADP + phosphate. The protein operates within one-carbon metabolism; tetrahydrofolate interconversion. The polypeptide is Formate--tetrahydrofolate ligase (Fervidobacterium nodosum (strain ATCC 35602 / DSM 5306 / Rt17-B1)).